Consider the following 592-residue polypeptide: MELATTQSVLMQIQPTIQRFARMLASVLQLEVEIVDENLCRVAGTGAYGKFLGRQLSGNSRLLRHVLETKTEKVVTQSRFDPLCEGCDSKENCREKAFLGTPVILQDRCVGVISLIAVTHEQQEHISDNLREFSDYVRHISTIFVSKLLEDQGPGDNISKIFATMIDNMDQGVLVVDDENRVQFVNQTALKTLGVVQNNIIGKPIRFRPLTFESNFTHGHMQHIVSWDDKSELIIGQLHNIQGRQLFLMAFHQSHTSFSVANAPDEPHIEQLVGECRVMRQLKRLISRIAPSPSSVMVVGESGTGKEVVARAIHKLSGRRNKPFIAINCAAIPEQLLESELFGYVKGAFTGASANGKTGLIQAANTGTLFLDEIGDMPLMLQAKLLRAIEAREILPIGASSPIQVDIRIISATNQNLAQFIAEGKFREDLFYRLNVIPITLPPLRERQEDIELLVHYFLHLHTRRLGSVYPGIAPDVVEILRKHRWPGNLRELSNLMEYLVNVVPSGEVIDSTLLPPNLLNNGTTEQSDVTEVSEAHLSLDDAGGTALEEMEKQMIREALSRHNSKKQVADELGIGIATLYRKIKKYELLNT.

In terms of domain architecture, PAS spans 158–229; the sequence is ISKIFATMID…HMQHIVSWDD (72 aa). The Sigma-54 factor interaction domain maps to 272-502; the sequence is LVGECRVMRQ…LSNLMEYLVN (231 aa). ATP-binding positions include 300–307 and 364–373; these read GESGTGKE and ANTGTLFLDE. The H-T-H motif DNA-binding region spans 567–585; the sequence is KQVADELGIGIATLYRKIK.

Essential for both formate-dependent and formate-independent uric acid degradation. May be directly involved in the transcription of uacF in response to hypoxanthine, xanthine, and uric acid. The chain is Putative uric acid sigma-54-dependent transcriptional regulator UacR from Escherichia coli (strain K12).